The following is a 183-amino-acid chain: Bifunctional protein PyrR (183 aa).

Positions 102 to 114 (VVLVDDVLYTGRT) match the PRPP-binding motif.

Belongs to the purine/pyrimidine phosphoribosyltransferase family. PyrR subfamily. In terms of assembly, homodimer and homohexamer; in equilibrium.

It carries out the reaction UMP + diphosphate = 5-phospho-alpha-D-ribose 1-diphosphate + uracil. Its function is as follows. Regulates transcriptional attenuation of the pyrimidine nucleotide (pyr) operon by binding in a uridine-dependent manner to specific sites on pyr mRNA. This disrupts an antiterminator hairpin in the RNA and favors formation of a downstream transcription terminator, leading to a reduced expression of downstream genes. Functionally, also displays a weak uracil phosphoribosyltransferase activity which is not physiologically significant. The polypeptide is Bifunctional protein PyrR (Listeria monocytogenes serotype 4a (strain HCC23)).